The sequence spans 290 residues: Enoyl-CoA hydratase, mitochondrial (290 aa).

The transit peptide at 1–27 directs the protein to the mitochondrion; the sequence is MAALRVLLSCVRGPLRPPVRCPAWRPF. Position 46 is a phosphothreonine (threonine 46). Residue 98 to 101 participates in substrate binding; the sequence is ADIK. Lysine 101 is subject to N6-acetyllysine; alternate. Residue lysine 101 is modified to N6-succinyllysine; alternate. At serine 114 the chain carries Phosphoserine. Position 115 is an N6-acetyllysine; alternate (lysine 115). An N6-succinyllysine; alternate modification is found at lysine 115. N6-acetyllysine is present on lysine 118. Position 141 (glycine 141) interacts with substrate. Residue lysine 204 is modified to N6-succinyllysine. N6-acetyllysine is present on lysine 211.

This sequence belongs to the enoyl-CoA hydratase/isomerase family. As to quaternary structure, homohexamer; dimer of trimers. Liver, fibroblast, muscle. Barely detectable in spleen and kidney.

The protein localises to the mitochondrion matrix. The enzyme catalyses a (3S)-3-hydroxyacyl-CoA = a (2E)-enoyl-CoA + H2O. It carries out the reaction a (3E)-enoyl-CoA = a 4-saturated (2E)-enoyl-CoA. The catalysed reaction is (3E)-hexenoyl-CoA = (2E)-hexenoyl-CoA. It catalyses the reaction (3S)-3-hydroxybutanoyl-CoA = (2E)-butenoyl-CoA + H2O. The enzyme catalyses 3-hydroxyisovaleryl-CoA = 3-methylbut-2-enoyl-CoA + H2O. It carries out the reaction 3-hydroxypropanoyl-CoA = acryloyl-CoA + H2O. The catalysed reaction is 3-hydroxybutanoyl-CoA = (2E)-butenoyl-CoA + H2O. It catalyses the reaction 2-methylpropenoyl-CoA + H2O = (S)-3-hydroxyisobutanoyl-CoA. The enzyme catalyses (3S)-hydroxyhexanoyl-CoA = (2E)-hexenoyl-CoA + H2O. It carries out the reaction (3S)-hydroxydecanoyl-CoA = (2E)-decenoyl-CoA + H2O. The protein operates within lipid metabolism; fatty acid beta-oxidation. Functionally, converts unsaturated trans-2-enoyl-CoA species ((2E)-enoyl-CoA) to the corresponding (3S)-3hydroxyacyl-CoA species through addition of a water molecule to the double bond. Catalyzes the hydration of medium- and short-chained fatty enoyl-CoA thioesters from 4 carbons long (C4) up to C16. Has high substrate specificity for crotonyl-CoA ((2E)-butenoyl-CoA) and moderate specificity for acryloyl-CoA, 3-methylcrotonyl-CoA (3-methyl-(2E)-butenoyl-CoA) and methacrylyl-CoA ((2E)-2-methylpropenoyl-CoA). Can bind tiglyl-CoA (2-methylcrotonoyl-CoA), but hydrates only a small amount of this substrate. Plays a key role in the beta-oxidation spiral of short- and medium-chain fatty acid oxidation. At a lower rate than the hydratase reaction, catalyzes the isomerase reaction of trans-3-enoyl-CoA species (such as (3E)-hexenoyl-CoA) to trans-2-enoyl-CoA species (such as (2E)-hexenoyl-CoA), which are subsequently hydrated to 3(S)-3-hydroxyacyl-CoA species (such as (3S)-hydroxyhexanoyl-CoA). The polypeptide is Enoyl-CoA hydratase, mitochondrial (Homo sapiens (Human)).